Here is a 380-residue protein sequence, read N- to C-terminus: Ubiquitin-like protein 7 (380 aa).

The Ubiquitin-like domain occupies 18–98; the sequence is APKSILRLPE…VLRKSWPEPD (81 aa). Residues 201–313 are disordered; it reads PMPGADSSSR…SSSVQSGTPI (113 aa). Phosphoserine is present on S230. Composition is skewed to low complexity over residues 239–255 and 270–312; these read SARSTPSSSTPSSRPAS and SELA…SGTP. Residues 333–377 form the UBA domain; it reads SLQSQWQPQLQQLRDMGIQDDELSLRALQATGGDIQAALELIFAG.

Binds ubiquitin. Interacts with MAVS; this interaction enhances TRIM21-dependent 'Lys-27'-linked polyubiquitination of MAVS. Deubiquitinated by OTUD4 which stabilizes UBL7 expression.

In terms of biological role, interferon-stimulated protein that positively regulates RNA virus-triggered innate immune signaling. Mechanistically, promotes 'Lys-27'-linked polyubiquitination of MAVS through TRIM21 leading to enhanced the IFN signaling pathway. In Bos taurus (Bovine), this protein is Ubiquitin-like protein 7 (UBL7).